Consider the following 983-residue polypeptide: Chaperone protein ClpB3, mitochondrial (983 aa).

The N-terminal 87 residues, methionine 1 to tyrosine 87, are a transit peptide targeting the mitochondrion. Positions proline 97 to serine 240 constitute a Clp R domain. Repeat stretches follow at residues phenylalanine 100–glutamine 165 and isoleucine 177–serine 240. Residues leucine 255 to proline 503 form an i region. An ATP-binding site is contributed by glycine 300–threonine 307. A coiled-coil region spans residues isoleucine 504–glutamate 627. Positions valine 629–serine 820 are II. Glycine 703 to threonine 710 provides a ligand contact to ATP.

Belongs to the ClpA/ClpB family.

The protein resides in the mitochondrion. In terms of biological role, molecular chaperone that may not be involved in heat stress response or tolerance. This chain is Chaperone protein ClpB3, mitochondrial (CLPB3), found in Oryza sativa subsp. japonica (Rice).